The sequence spans 465 residues: Kynureninase (465 aa).

Methionine 1 is subject to N-acetylmethionine. Pyridoxal 5'-phosphate-binding positions include leucine 137, threonine 138, 165–168, serine 221, aspartate 250, histidine 253, and tyrosine 275; that span reads FPSD. Lysine 276 bears the N6-(pyridoxal phosphate)lysine mark. Pyridoxal 5'-phosphate-binding residues include tryptophan 305 and asparagine 333.

The protein belongs to the kynureninase family. As to quaternary structure, homodimer. It depends on pyridoxal 5'-phosphate as a cofactor. Expressed in all tissues tested (heart, brain placenta, lung, liver, skeletal muscle, kidney and pancreas). Highest levels found in placenta, liver and lung. Expressed in all brain regions.

The protein localises to the cytoplasm. It localises to the cytosol. The enzyme catalyses L-kynurenine + H2O = anthranilate + L-alanine + H(+). It catalyses the reaction 3-hydroxy-L-kynurenine + H2O = 3-hydroxyanthranilate + L-alanine + H(+). It participates in amino-acid degradation; L-kynurenine degradation; L-alanine and anthranilate from L-kynurenine: step 1/1. It functions in the pathway cofactor biosynthesis; NAD(+) biosynthesis; quinolinate from L-kynurenine: step 2/3. Inhibited by o-methoxybenzoylalanine (OMBA). Catalyzes the cleavage of L-kynurenine (L-Kyn) and L-3-hydroxykynurenine (L-3OHKyn) into anthranilic acid (AA) and 3-hydroxyanthranilic acid (3-OHAA), respectively. Has a preference for the L-3-hydroxy form. Also has cysteine-conjugate-beta-lyase activity. The protein is Kynureninase of Homo sapiens (Human).